Consider the following 183-residue polypeptide: ATP synthase subunit delta (183 aa).

This sequence belongs to the ATPase delta chain family. In terms of assembly, F-type ATPases have 2 components, F(1) - the catalytic core - and F(0) - the membrane proton channel. F(1) has five subunits: alpha(3), beta(3), gamma(1), delta(1), epsilon(1). F(0) has three main subunits: a(1), b(2) and c(10-14). The alpha and beta chains form an alternating ring which encloses part of the gamma chain. F(1) is attached to F(0) by a central stalk formed by the gamma and epsilon chains, while a peripheral stalk is formed by the delta and b chains.

It localises to the cell inner membrane. Its function is as follows. F(1)F(0) ATP synthase produces ATP from ADP in the presence of a proton or sodium gradient. F-type ATPases consist of two structural domains, F(1) containing the extramembraneous catalytic core and F(0) containing the membrane proton channel, linked together by a central stalk and a peripheral stalk. During catalysis, ATP synthesis in the catalytic domain of F(1) is coupled via a rotary mechanism of the central stalk subunits to proton translocation. Functionally, this protein is part of the stalk that links CF(0) to CF(1). It either transmits conformational changes from CF(0) to CF(1) or is implicated in proton conduction. In Desulforapulum autotrophicum (strain ATCC 43914 / DSM 3382 / VKM B-1955 / HRM2) (Desulfobacterium autotrophicum), this protein is ATP synthase subunit delta.